The primary structure comprises 68 residues: Protein P33 (68 aa).

Positions 34–63 form a coiled coil; sequence IVNLQGRIAELEARETEMLARVDTLIARLA.

Functionally, assembly protein. The polypeptide is Protein P33 (XXXIII) (Acinetobacter calcoaceticus (Arthrobacter siderocapsulatus)).